Consider the following 511-residue polypeptide: Maturase K (511 aa).

Belongs to the intron maturase 2 family. MatK subfamily.

It localises to the plastid. Its subcellular location is the chloroplast. Functionally, usually encoded in the trnK tRNA gene intron. Probably assists in splicing its own and other chloroplast group II introns. The protein is Maturase K of Hordeum murinum subsp. leporinum (Mouse barley).